A 159-amino-acid chain; its full sequence is 17 kDa surface antigen (159 aa).

A signal peptide spans 1–19 (MKLLSKIMIIALATSMLQA). C20 carries the N-palmitoyl cysteine lipid modification. C20 carries the S-diacylglycerol cysteine lipid modification.

This sequence belongs to the rickettsiale 17 kDa surface antigen family.

The protein localises to the cell outer membrane. The chain is 17 kDa surface antigen (omp) from Rickettsia japonica (strain ATCC VR-1363 / YH).